The following is a 704-amino-acid chain: Protein kinase C-like 1 (704 aa).

Residues Thr89 and Thr139 each carry the phosphothreonine; by autocatalysis modification. Phorbol-ester/DAG-type zinc fingers lie at residues 165–215 and 237–287; these read GHQF…IMQC and PHRF…SNLC. The residue at position 324 (Thr324) is a Phosphothreonine; by autocatalysis. In terms of domain architecture, Protein kinase spans 375–634; sequence FNLLKVLGKG…DGPIRQHCFF (260 aa). ATP is bound by residues 381–389 and Lys404; that span reads LGKGSFGKV. The active-site Proton acceptor is the Asp499. Positions 635–704 constitute an AGC-kinase C-terminal domain; sequence RGVDWKRFEN…FSYTNPHFSK (70 aa).

This sequence belongs to the protein kinase superfamily. AGC Ser/Thr protein kinase family. PKC subfamily.

The catalysed reaction is L-seryl-[protein] + ATP = O-phospho-L-seryl-[protein] + ADP + H(+). It carries out the reaction L-threonyl-[protein] + ATP = O-phospho-L-threonyl-[protein] + ADP + H(+). In terms of biological role, diacylglycerol (DAG)-dependent serine/threonine-protein kinase that phosphorylates a range of cellular proteins. Phosphorylates mlk-1, a component of the JNK pathway. Involved in axon regeneration after injury probably by activating the JNK pathway. Plays a role in resistance to fungal infection and in wound healing by promoting expression of antimicrobial peptide nlp-29 in the epidermis downstream of gpa-12 and plc-3 and upstream of tir-1-p38-like pathway. Probably by regulating neuronal transmission in ALA neurons, regulates the decrease in pharyngeal pumping during the quiescent state that precedes each larval molt, downstream of lin-3 and receptor let-23 and phospholipase plc-3. This Caenorhabditis elegans protein is Protein kinase C-like 1 (tpa-1).